Reading from the N-terminus, the 276-residue chain is Large ribosomal subunit protein uL2c (276 aa).

A disordered region spans residues 223–254 (VVKNPIDHPHGGGEGRSPIGRAKPVTPWGQPA).

It belongs to the universal ribosomal protein uL2 family. As to quaternary structure, part of the 50S ribosomal subunit.

It localises to the plastid. The protein localises to the chloroplast. This is Large ribosomal subunit protein uL2c (rpl2) from Emiliania huxleyi (Coccolithophore).